The sequence spans 119 residues: MVARVWSLMRFLIKGSVAGGAVYLVYDQELLGPSDKSEAALRKAEEVVPPAMYQFSQYVCQQTGLEMPQLPTPPKIKFPNFRDSWNSGIISVMSALSVAPSKAREYSKEGWEYLKEHSK.

Over 1–7 (MVARVWS) the chain is Mitochondrial matrix. A helical membrane pass occupies residues 8–26 (LMRFLIKGSVAGGAVYLVY). Residues 27-119 (DQELLGPSDK…GWEYLKEHSK (93 aa)) lie on the Mitochondrial intermembrane side of the membrane.

This sequence belongs to the MICOS complex subunit Mic13 family. As to quaternary structure, component of the mitochondrial contact site and cristae organizing system (MICOS) complex, composed of at least MICOS10/MIC10, CHCHD3/MIC19, CHCHD6/MIC25, APOO/MIC26, MICOS13/MIC13, APOOL/MIC27 and IMMT/MIC60. The MICOS complex associates with mitochondrial outer membrane proteins SAMM50, MTX1 and MTX2 (together described as components of the mitochondrial outer membrane sorting assembly machinery (SAM) complex) and DNAJC11, mitochondrial inner membrane protein TMEM11 and with HSPA9. The MICOS and SAM complexes together with DNAJC11 are part of a large protein complex spanning both membranes termed the mitochondrial intermembrane space bridging (MIB) complex.

The protein localises to the mitochondrion inner membrane. In terms of biological role, component of the MICOS complex, a large protein complex of the mitochondrial inner membrane that plays crucial roles in the maintenance of crista junctions, inner membrane architecture, and formation of contact sites to the outer membrane. Constituent of mature MICOS complex, it is required for the formation of cristae junction (CJ) and maintenance of cristae morphology. Required for the incorporation of MICOS10/MIC10 into the MICOS complex. This chain is MICOS complex subunit MIC13 (Micos13), found in Mus musculus (Mouse).